A 2275-amino-acid polypeptide reads, in one-letter code: Multifunctional protein pyrABCN (2275 aa).

The GATase (Glutamine amidotransferase) stretch occupies residues 1–440; that stretch reads MPETVGHEEP…PGPRDTEYLF (440 aa). 3 residues coordinate L-glutamine: Ser102, Gly313, and Gly315. The 189-residue stretch at 265 to 453 folds into the Glutamine amidotransferase type-1 domain; it reads RVLCLDVGLK…INAIKDTIAS (189 aa). Cys342 acts as the Nucleophile; for GATase activity in catalysis. L-glutamine is bound by residues Leu343, Gln346, Asn384, Gly386, and Tyr387. Residues His426 and Glu428 each act as for GATase activity in the active site. The segment at 441–482 is linker; it reads DVFINAIKDTIASPEALQKPVNFPGGAVAENIKASPRVSVKK. The segment at 483–1522 is CPSase (Carbamoyl-phosphate synthase); it reads VLILGSGGLS…TNVKNAKILI (1040 aa). The ATP site is built by Arg600, Arg640, Gly646, Gly647, Arg677, Met679, Glu684, Gly710, Ile711, His712, Gln753, and Glu767. ATP-grasp domains are found at residues 604 to 796 and 1139 to 1330; these read ARSM…KLGL and SRML…KAMI. 3 residues coordinate Mg(2+): Gln753, Glu767, and Asn769. Positions 753, 767, and 769 each coordinate Mn(2+). The ATP site is built by Arg1175, Lys1214, Ile1216, Glu1221, Gly1246, Val1247, His1248, Ser1249, Gln1289, and Glu1301. Mg(2+) contacts are provided by Gln1289, Glu1301, and Asn1303. Residues Gln1289, Glu1301, and Asn1303 each contribute to the Mn(2+) site. An MGS-like domain is found at 1396–1575; the sequence is FKLPKRNILL…KDFEAVTKAS (180 aa). The segment at 1523 to 1532 is linker; sequence EAIARHYALN. The defective DHOase domain stretch occupies residues 1533-1862; that stretch reads VQTIDYQTSH…FQGKTSCLDS (330 aa). The interval 1863–1882 is disordered; it reads EITPDAPKGSDMSGHRIVPA. The segment at 1863 to 1953 is linker; it reads EITPDAPKGS…LQMLSRSPFK (91 aa). Residues 1954–2258 are ATCase (Aspartate transcarbamylase); that stretch reads QKHVLSVNQF…EFDMLMWMQM (305 aa). Carbamoyl phosphate-binding residues include Arg2006 and Thr2007. Lys2034 provides a ligand contact to L-aspartate. 3 residues coordinate carbamoyl phosphate: Arg2055, His2083, and Gln2086. Residues Arg2116 and Arg2178 each contribute to the L-aspartate site. The carbamoyl phosphate site is built by Leu2217 and Pro2218.

In the central section; belongs to the metallo-dependent hydrolases superfamily. DHOase family. CAD subfamily. The protein in the N-terminal section; belongs to the CarA family. It in the 2nd section; belongs to the CarB family. This sequence in the 3rd section; belongs to the metallo-dependent hydrolases superfamily. DHOase family. CAD subfamily. In the C-terminal section; belongs to the aspartate/ornithine carbamoyltransferase superfamily. ATCase family. The cofactor is Mg(2+). Requires Mn(2+) as cofactor.

It catalyses the reaction hydrogencarbonate + L-glutamine + 2 ATP + H2O = carbamoyl phosphate + L-glutamate + 2 ADP + phosphate + 2 H(+). The enzyme catalyses L-glutamine + H2O = L-glutamate + NH4(+). It carries out the reaction hydrogencarbonate + NH4(+) + 2 ATP = carbamoyl phosphate + 2 ADP + phosphate + 2 H(+). The catalysed reaction is carbamoyl phosphate + L-aspartate = N-carbamoyl-L-aspartate + phosphate + H(+). The protein operates within pyrimidine metabolism; UMP biosynthesis via de novo pathway; (S)-dihydroorotate from bicarbonate: step 1/3. It functions in the pathway pyrimidine metabolism; UMP biosynthesis via de novo pathway; (S)-dihydroorotate from bicarbonate: step 2/3. Multifunctional protein that encodes the first 2 enzymatic activities of the de novo pyrimidine pathway: carbamoylphosphate synthetase (CPSase; EC 6.3.5.5) and aspartate transcarbamylase (ATCase; EC 2.1.3.2). The CPSase-function is accomplished in 2 steps, by a glutamine-dependent amidotransferase activity (GATase) that binds and cleaves glutamine to produce ammonia, followed by an ammonium-dependent carbamoyl phosphate synthetase, which reacts with the ammonia, hydrogencarbonate and ATP to form carbamoyl phosphate. The endogenously produced carbamoyl phosphate is sequestered and channeled to the ATCase active site. ATCase then catalyzes the formation of carbamoyl-L-aspartate from L-aspartate and carbamoyl phosphate. The chain is Multifunctional protein pyrABCN from Emericella nidulans (strain FGSC A4 / ATCC 38163 / CBS 112.46 / NRRL 194 / M139) (Aspergillus nidulans).